We begin with the raw amino-acid sequence, 199 residues long: Transgelin-3 (199 aa).

Residues 24 to 136 (ADLENKLVDW…RTLMALGSVA (113 aa)) form the Calponin-homology (CH) domain. At Ser-163 the chain carries Phosphoserine. The stretch at 174–199 (IGLQMGSNKGASQAGMTGYGMPRQIM) is one Calponin-like repeat. Residues 178–188 (MGSNKGASQAG) are compositionally biased toward polar residues. Positions 178-199 (MGSNKGASQAGMTGYGMPRQIM) are disordered.

The protein belongs to the calponin family.

This is Transgelin-3 (Tagln3) from Mus musculus (Mouse).